Here is a 164-residue protein sequence, read N- to C-terminus: Ribosome maturation factor RimM (164 aa).

The region spanning 90–161 (EGRYYVADII…EIIIKPVKTW (72 aa)) is the PRC barrel domain.

This sequence belongs to the RimM family. In terms of assembly, binds ribosomal protein uS19.

It is found in the cytoplasm. An accessory protein needed during the final step in the assembly of 30S ribosomal subunit, possibly for assembly of the head region. Essential for efficient processing of 16S rRNA. May be needed both before and after RbfA during the maturation of 16S rRNA. It has affinity for free ribosomal 30S subunits but not for 70S ribosomes. The protein is Ribosome maturation factor RimM of Clostridium tetani (strain Massachusetts / E88).